A 245-amino-acid polypeptide reads, in one-letter code: MKIDYLTLFPEMFDGVLNHSIMKRAQENNKLQINTVNFRDYAINKHNQVDDYPYGGGQGMVLKPEPVFNAMEDLDVTEQTRVILMCPQGEPFSHQKAVELSKADHIVFICGHYEGYDERIRTHLVTDEISMGDYVLTGGELPAMTMTDAIVRLIPGVLGNEQSHQDDSFSDGLLEFPQYTRPREFKGLTVPDVLLSGNHANIDAWRHEQKLIRTYNKRPDLIEKYPLTNEDKQILERYKIGLKKG.

Residues G111 and 131–136 (MGDYVL) each bind S-adenosyl-L-methionine.

Belongs to the RNA methyltransferase TrmD family. Homodimer.

The protein localises to the cytoplasm. It catalyses the reaction guanosine(37) in tRNA + S-adenosyl-L-methionine = N(1)-methylguanosine(37) in tRNA + S-adenosyl-L-homocysteine + H(+). Its function is as follows. Specifically methylates guanosine-37 in various tRNAs. The chain is tRNA (guanine-N(1)-)-methyltransferase from Staphylococcus aureus (strain Mu3 / ATCC 700698).